We begin with the raw amino-acid sequence, 666 residues long: Probable potassium transport system protein Kup (666 aa).

Transmembrane regions (helical) follow at residues 16–36, 58–78, 100–120, 141–161, 165–185, 221–241, 253–273, 292–312, 343–363, 373–393, 399–419, and 424–444; these read GFIIALGIVYGDIGTSPLYTM, ISLIIWTLTLITTIKYVLIAL, PWLIIPAMIGGATLLSDGALT, IYQNQTNVIITTLVILIVLFG, FGTGFIGKIFGPVMFIWFSFL, IFILGSIFLATTGAEALYSDL, WPFVKMCIVLSYCGQAAWILA, LTVYVVILATLAAIIASQALI, LYIPVINWILFAVTSCTVLYF, YGLAITITMLMTTILLNYYLI, PFLAHLVMTFFALVEFIFFWA, and FMHGGYVVVILALAIVFVMFI.

The protein belongs to the HAK/KUP transporter (TC 2.A.72) family.

Its subcellular location is the cell membrane. The enzyme catalyses K(+)(in) + H(+)(in) = K(+)(out) + H(+)(out). In terms of biological role, transport of potassium into the cell. Likely operates as a K(+):H(+) symporter. The chain is Probable potassium transport system protein Kup from Streptococcus pyogenes serotype M18 (strain MGAS8232).